A 640-amino-acid chain; its full sequence is Auxin efflux carrier component 3 (640 aa).

The Extracellular segment spans residues Met-1–Leu-7. The chain crosses the membrane as a helical span at residues Tyr-8–Val-28. At Arg-29–Gln-38 the chain is on the cytoplasmic side. Residues Cys-39 to Ile-59 traverse the membrane as a helical segment. Val-51 serves as a coordination point for (indol-3-yl)acetate. Topologically, residues Ser-60 to Phe-71 are extracellular. Residues Ile-72–Phe-92 traverse the membrane as a helical segment. Residues Thr-93–Ser-101 are Cytoplasmic-facing. The helical transmembrane segment at Ile-102–Ile-122 threads the bilayer. Residues Asn-112 and Leu-114 each coordinate (indol-3-yl)acetate. Residues Ala-123–Ser-131 are Extracellular-facing. Residues Leu-132–Phe-152 traverse the membrane as a helical segment. Tyr-145 is a binding site for (indol-3-yl)acetate. The Cytoplasmic segment spans residues Glu-153–Ser-500. Residues Ser-226, Ser-243, and Ser-283 each carry the phosphoserine modification. The tract at residues Ala-310 to His-351 is disordered. The span at Glu-314–Ser-348 shows a compositional bias: polar residues. Thr-322 is modified (phosphothreonine). Phosphoserine is present on Ser-366. 2 disordered regions span residues Ala-372–Gln-391 and Ser-404–Lys-471. Over residues Gly-430–Glu-442 the composition is skewed to basic and acidic residues. Residues Ala-449–Thr-460 show a composition bias toward polar residues. Residues Leu-501–Ile-521 form a helical membrane-spanning segment. Topologically, residues Gln-522 to Ser-524 are extracellular. A helical transmembrane segment spans residues Ile-525–Ala-545. The Cytoplasmic portion of the chain corresponds to Leu-546–Thr-559. Residues Phe-560–Ile-580 form a helical membrane-spanning segment. Topologically, residues Gly-581–Asp-585 are extracellular. The helical transmembrane segment at Leu-586–Ala-606 threads the bilayer. Residues Ile-600 and Val-601 each contribute to the (indol-3-yl)acetate site. Topologically, residues Lys-607–Gly-619 are cytoplasmic. The chain crosses the membrane as a helical span at residues Val-620–Leu-640.

Belongs to the auxin efflux carrier (TC 2.A.69.1) family. As to quaternary structure, homodimer. In terms of tissue distribution, predominantly expressed at the lateral side of shoot endodermis cells as well as root pericycle and columella cells.

Its subcellular location is the cell membrane. With respect to regulation, auxin efflux carrier activity is competitively inhibited by naptalamate (N-1-naphthylphthalamic acid, NPA). Its function is as follows. Acts as a component of the auxin efflux carrier; this activity is enhanced when activated by PID-mediated phosphorylation. Seems to be involved in the lateral auxin transport system. Together with PIN4 and PIN7, involved in the connective auxin transport (CAT) that ensures communication across the shoot system, and modulates strigolactone-mediated shoot branching control. Binds auxins including indole-3-acetic acid (IAA). Coordinated polar localization of PIN3 is directly regulated by the vesicle trafficking process. This is Auxin efflux carrier component 3 from Arabidopsis thaliana (Mouse-ear cress).